The chain runs to 304 residues: HTH-type transcriptional regulator BenM (304 aa).

Positions 1 to 58 (MELRHLRYFVAVVEEQSFTKAADKLCIAQPPLSRQIQNLEEELGIQLLERGSRPVKTT) constitute an HTH lysR-type domain. Residues 18–37 (FTKAADKLCIAQPPLSRQIQ) constitute a DNA-binding region (H-T-H motif). 2 residues coordinate benzoate: Ser99 and Leu104. Ser99 serves as a coordination point for cis,cis-muconate. Cis,cis-muconate is bound at residue Thr128. Phe144, Arg160, and Asn202 together coordinate benzoate. Phe203 is a cis,cis-muconate binding site. Tyr293 is a benzoate binding site.

This sequence belongs to the LysR transcriptional regulatory family. Homotetramer; dimer of dimers. The dimers can also associate to form linear, higher oligomers (in vitro).

Functionally, positive regulator of the ben and cat genes for benzoate degradation. BenM is necessary for ben gene expression but not for expression of the cat genes, which can be regulated by CatM. Binds to the inducers cis,cis-muconate and benzoate. The protein is HTH-type transcriptional regulator BenM (benM) of Acinetobacter baylyi (strain ATCC 33305 / BD413 / ADP1).